Reading from the N-terminus, the 365-residue chain is MRRVILTTGGTGGHIFPALAVAEEIRARYPECSVLFMGGLYGPEADLAARAGLDFVGLPVRGVLGRGVRAIGAAFGMAAGIARAYAVMGRFDPDIVLGFGGYAAFAGVLAARLRGRPAAIHEQNSVPGVTNRVLSRVVPRVFLSLPDTLGAFPPQKTCLAGNPVRASIVACGAERSDPRPDHVRRLLVMGGSLGARAINDAVVSSLPALAEAGVEVWHQTGAADWERIRKAYAETGHGEGRVEAFIDDVASAYAWADLVLCRAGATSVAELAVAGKPAVLVPYPFATHDHQTHNARWLVSRGAAVLLEQKDISMTDVPALLVGLLSDRARLNRMAVSARAQGRPDAAAAVVDGLVELLKTTPRAR.

Residues 11–13, N124, R165, S192, I246, and Q291 contribute to the UDP-N-acetyl-alpha-D-glucosamine site; that span reads TGG.

It belongs to the glycosyltransferase 28 family. MurG subfamily.

It is found in the cell inner membrane. It catalyses the reaction di-trans,octa-cis-undecaprenyl diphospho-N-acetyl-alpha-D-muramoyl-L-alanyl-D-glutamyl-meso-2,6-diaminopimeloyl-D-alanyl-D-alanine + UDP-N-acetyl-alpha-D-glucosamine = di-trans,octa-cis-undecaprenyl diphospho-[N-acetyl-alpha-D-glucosaminyl-(1-&gt;4)]-N-acetyl-alpha-D-muramoyl-L-alanyl-D-glutamyl-meso-2,6-diaminopimeloyl-D-alanyl-D-alanine + UDP + H(+). It participates in cell wall biogenesis; peptidoglycan biosynthesis. Its function is as follows. Cell wall formation. Catalyzes the transfer of a GlcNAc subunit on undecaprenyl-pyrophosphoryl-MurNAc-pentapeptide (lipid intermediate I) to form undecaprenyl-pyrophosphoryl-MurNAc-(pentapeptide)GlcNAc (lipid intermediate II). The chain is UDP-N-acetylglucosamine--N-acetylmuramyl-(pentapeptide) pyrophosphoryl-undecaprenol N-acetylglucosamine transferase from Nitratidesulfovibrio vulgaris (strain DP4) (Desulfovibrio vulgaris).